The sequence spans 148 residues: Lysozyme C (148 aa).

A signal peptide spans 1 to 18 (MKALIVLGLVLLSVTVQG). Positions 19-148 (KVFERCELAR…VRQYVQGCGV (130 aa)) constitute a C-type lysozyme domain. Cystine bridges form between cysteine 24/cysteine 146, cysteine 48/cysteine 134, cysteine 83/cysteine 99, and cysteine 95/cysteine 113. Residues glutamate 53 and aspartate 71 contribute to the active site.

It belongs to the glycosyl hydrolase 22 family. In terms of assembly, monomer.

Its subcellular location is the secreted. It catalyses the reaction Hydrolysis of (1-&gt;4)-beta-linkages between N-acetylmuramic acid and N-acetyl-D-glucosamine residues in a peptidoglycan and between N-acetyl-D-glucosamine residues in chitodextrins.. In terms of biological role, lysozymes have primarily a bacteriolytic function; those in tissues and body fluids are associated with the monocyte-macrophage system and enhance the activity of immunoagents. The polypeptide is Lysozyme C (LYZ) (Homo sapiens (Human)).